A 75-amino-acid polypeptide reads, in one-letter code: uncharacterized protein (75 aa).

This is an uncharacterized protein from Escherichia coli (strain K12).